Reading from the N-terminus, the 344-residue chain is Holliday junction branch migration complex subunit RuvB (344 aa).

Positions 1–185 are large ATPase domain (RuvB-L); that stretch reads MSTSRSDALK…FGIDFRYDYY (185 aa). ATP-binding positions include Leu24, Arg25, Gly66, Lys69, Thr70, Thr71, 132-134, Arg175, Tyr185, and Arg222; that span reads EDY. Thr70 is a Mg(2+) binding site. A small ATPAse domain (RuvB-S) region spans residues 186–256; that stretch reads TADLLQEITQ…IADRALNALD (71 aa). Positions 259–344 are head domain (RuvB-H); the sequence is EEGLDDMDAR…AADQDLFDQE (86 aa). Residues Arg314 and Arg319 each coordinate DNA.

The protein belongs to the RuvB family. Homohexamer. Forms an RuvA(8)-RuvB(12)-Holliday junction (HJ) complex. HJ DNA is sandwiched between 2 RuvA tetramers; dsDNA enters through RuvA and exits via RuvB. An RuvB hexamer assembles on each DNA strand where it exits the tetramer. Each RuvB hexamer is contacted by two RuvA subunits (via domain III) on 2 adjacent RuvB subunits; this complex drives branch migration. In the full resolvosome a probable DNA-RuvA(4)-RuvB(12)-RuvC(2) complex forms which resolves the HJ.

Its subcellular location is the cytoplasm. The catalysed reaction is ATP + H2O = ADP + phosphate + H(+). In terms of biological role, the RuvA-RuvB-RuvC complex processes Holliday junction (HJ) DNA during genetic recombination and DNA repair, while the RuvA-RuvB complex plays an important role in the rescue of blocked DNA replication forks via replication fork reversal (RFR). RuvA specifically binds to HJ cruciform DNA, conferring on it an open structure. The RuvB hexamer acts as an ATP-dependent pump, pulling dsDNA into and through the RuvAB complex. RuvB forms 2 homohexamers on either side of HJ DNA bound by 1 or 2 RuvA tetramers; 4 subunits per hexamer contact DNA at a time. Coordinated motions by a converter formed by DNA-disengaged RuvB subunits stimulates ATP hydrolysis and nucleotide exchange. Immobilization of the converter enables RuvB to convert the ATP-contained energy into a lever motion, pulling 2 nucleotides of DNA out of the RuvA tetramer per ATP hydrolyzed, thus driving DNA branch migration. The RuvB motors rotate together with the DNA substrate, which together with the progressing nucleotide cycle form the mechanistic basis for DNA recombination by continuous HJ branch migration. Branch migration allows RuvC to scan DNA until it finds its consensus sequence, where it cleaves and resolves cruciform DNA. This is Holliday junction branch migration complex subunit RuvB from Salinibacter ruber (strain DSM 13855 / M31).